A 332-amino-acid polypeptide reads, in one-letter code: Stage II sporulation protein B (332 aa).

The span at 1–10 (MKKRKNKKNS) shows a compositional bias: basic residues. Residues 1 to 71 (MKKRKNKKNS…EHPDEDEFNW (71 aa)) are disordered. Residues 11 to 27 (KAAEKALKVTINGKEET) show a composition bias toward basic and acidic residues. A helical transmembrane segment spans residues 112–132 (AATIAFAAVIGTGLGLFALNI). The disordered stretch occupies residues 139–174 (SAPASLEDSLGSQTAKAGDTSADKQTSGAEKQAAQT). The span at 161-174 (DKQTSGAEKQAAQT) shows a compositional bias: polar residues. Positions 175-250 (EGTYKTYAVQ…SDFEAWGGKE (76 aa)) constitute an SPOR domain.

It is found in the cell membrane. Its activity is regulated as follows. Appears to be degraded early in engulfment, in correlation with its loss from polar septa. Facilitates the rapid and spatially regulated dissolution of septal peptidoglycan. This Bacillus subtilis (strain 168) protein is Stage II sporulation protein B.